Here is a 329-residue protein sequence, read N- to C-terminus: Beta-ketoacyl-[acyl-carrier-protein] synthase III (329 aa).

Catalysis depends on residues Cys-123 and His-256. The ACP-binding stretch occupies residues 257–261; the sequence is QANIR. Asn-286 is an active-site residue.

It belongs to the thiolase-like superfamily. FabH family. As to quaternary structure, homodimer.

It localises to the cytoplasm. It carries out the reaction malonyl-[ACP] + acetyl-CoA + H(+) = 3-oxobutanoyl-[ACP] + CO2 + CoA. Its pathway is lipid metabolism; fatty acid biosynthesis. Its function is as follows. Catalyzes the condensation reaction of fatty acid synthesis by the addition to an acyl acceptor of two carbons from malonyl-ACP. Catalyzes the first condensation reaction which initiates fatty acid synthesis and may therefore play a role in governing the total rate of fatty acid production. Possesses both acetoacetyl-ACP synthase and acetyl transacylase activities. Its substrate specificity determines the biosynthesis of branched-chain and/or straight-chain of fatty acids. This chain is Beta-ketoacyl-[acyl-carrier-protein] synthase III, found in Burkholderia pseudomallei (strain 1710b).